The primary structure comprises 210 residues: MRCLTTPMLLRALAQAARAGPPCGRSLHSSAVAATYKYVNMQEPEMDMKSVTDRAARTLLLTELFRGLGMTLSYLFREPATINYPFEKGPLSPRFRGEHALRRYPSGEERCIACKLCEAICPAQAITIEAEPRADGSRRTTRYDIDMTKCIYCGFCQEACPVDAIVEGPNFEFSTETHEELLYNKEKLLNNGDKWEAEIAANIQADYLYR.

Residues 1 to 34 (MRCLTTPMLLRALAQAARAGPPCGRSLHSSAVAA) constitute a mitochondrion transit peptide. 2 4Fe-4S ferredoxin-type domains span residues 102–131 (RRYP…IEAE) and 141–170 (TRYD…EGPN). The [4Fe-4S] cluster site is built by Cys111, Cys114, Cys117, Cys121, Cys150, Cys153, Cys156, and Cys160.

The protein belongs to the complex I 23 kDa subunit family. In terms of assembly, core subunit of respiratory chain NADH dehydrogenase (Complex I) which is composed of 45 different subunits. This is a component of the iron-sulfur (IP) fragment of the enzyme. Interacts with RAB5IF. The cofactor is [4Fe-4S] cluster.

It localises to the mitochondrion inner membrane. The catalysed reaction is a ubiquinone + NADH + 5 H(+)(in) = a ubiquinol + NAD(+) + 4 H(+)(out). Core subunit of the mitochondrial membrane respiratory chain NADH dehydrogenase (Complex I) which catalyzes electron transfer from NADH through the respiratory chain, using ubiquinone as an electron acceptor. Essential for the catalytic activity and assembly of complex I. The sequence is that of NADH dehydrogenase [ubiquinone] iron-sulfur protein 8, mitochondrial (NDUFS8) from Pongo abelii (Sumatran orangutan).